Reading from the N-terminus, the 402-residue chain is Iripin-8 (402 aa).

An N-terminal signal peptide occupies residues 1 to 16 (MTRLLWLFAAITASLA). Asn-164 and Asn-230 each carry an N-linked (GlcNAc...) asparagine glycan.

This sequence belongs to the serpin family. Interacts with host thrombin/F2. Interacts with host coagulation factor VII/F7 (activated). Interacts with host coagulation factor X/F10 (activated). Interacts with host coagulation factor XII/F12 (activated). Interacts with host coagulation factor IX/F9 (activated). Interacts with host plasmin/PLG. Interacts with host protein C/PROC (activated). As to expression, saliva (at protein level). Salivary gland. Midgut. Low-level expression in ovary.

It is found in the secreted. Serine protease inhibitor that modulates blood feeding of ticks on vertebrate species. Inhibits the intrinsic and common pathways of blood coagulation in the host. Inhibits host thrombin, factor VIIa, factor Xa, factor XIa, factor XIIa, plasmin and activated protein C. Inhibits host trypsin and kallikrein. Reduces host complement activity. Does not affect proliferation of CD4+ T-cells and neutrophil migration. This is Iripin-8 from Ixodes ricinus (Common tick).